A 397-amino-acid polypeptide reads, in one-letter code: 3-hydroxy-3-methylglutaryl-coenzyme A reductase (397 aa).

Catalysis depends on charge relay system residues glutamate 96 and aspartate 301. The active-site Proton donor is the histidine 391.

It belongs to the HMG-CoA reductase family.

It catalyses the reaction (R)-mevalonate + 2 NADP(+) + CoA = (3S)-3-hydroxy-3-methylglutaryl-CoA + 2 NADPH + 2 H(+). It functions in the pathway metabolic intermediate biosynthesis; (R)-mevalonate biosynthesis; (R)-mevalonate from acetyl-CoA: step 3/3. Converts HMG-CoA to mevalonate. This Methanothermobacter thermautotrophicus (strain ATCC 29096 / DSM 1053 / JCM 10044 / NBRC 100330 / Delta H) (Methanobacterium thermoautotrophicum) protein is 3-hydroxy-3-methylglutaryl-coenzyme A reductase (hmgA).